A 113-amino-acid chain; its full sequence is Hydrogenase maturation factor HypA (113 aa).

Residue histidine 2 coordinates Ni(2+). Residues cysteine 70, cysteine 73, cysteine 86, and cysteine 88 each coordinate Zn(2+).

This sequence belongs to the HypA/HybF family.

Its function is as follows. Involved in the maturation of [NiFe] hydrogenases. Required for nickel insertion into the metal center of the hydrogenase. The chain is Hydrogenase maturation factor HypA from Nostoc punctiforme (strain ATCC 29133 / PCC 73102).